We begin with the raw amino-acid sequence, 200 residues long: Gene 55 protein (200 aa).

C8 carries the S-palmitoyl cysteine; by host lipid modification.

Belongs to the herpesviridae UL51 family. Oligomerizes. Interacts with ORF42; this interaction mediates ORF42 incorporation to virions. Phosphorylated. In terms of processing, palmitoylation is necessary for Golgi localization.

It is found in the virion tegument. The protein resides in the host cytoplasm. Its subcellular location is the host Golgi apparatus. Functionally, plays several roles during the time course of infection, including egress of virus particles from the perinuclear space and secondary envelopment of cytoplasmic capsids that bud into specific trans-Golgi network (TGN)-derived membranes. This is Gene 55 protein (55) from Saimiriine herpesvirus 2 (strain 11) (SaHV-2).